The primary structure comprises 177 residues: Glutathione peroxidase homolog (177 aa).

Cys-35 is a catalytic residue.

It belongs to the glutathione peroxidase family.

Important in the cellular metabolism or defense processes particular to this pathogen. The sequence is that of Glutathione peroxidase homolog (gpxA) from Neisseria meningitidis serogroup A / serotype 4A (strain DSM 15465 / Z2491).